A 97-amino-acid chain; its full sequence is Small ribosomal subunit protein bS20 (97 aa).

It belongs to the bacterial ribosomal protein bS20 family.

In terms of biological role, binds directly to 16S ribosomal RNA. This Prochlorococcus marinus subsp. pastoris (strain CCMP1986 / NIES-2087 / MED4) protein is Small ribosomal subunit protein bS20.